Consider the following 407-residue polypeptide: Na(+)-translocating NADH-quinone reductase subunit F (407 aa).

The chain crosses the membrane as a helical span at residues 3–23 (IILGVVMFTLIVLALVLVILF). The 2Fe-2S ferredoxin-type domain occupies 32-126 (GDITISVNGD…DMDIELPEEI (95 aa)). [2Fe-2S] cluster contacts are provided by C69, C75, C78, and C110. The region spanning 129–269 (VKKWECTVIS…SGPFGEFFAK (141 aa)) is the FAD-binding FR-type domain. The tract at residues 272-389 (DAEMVFIGGG…PMMNAAVIGM (118 aa)) is catalytic.

This sequence belongs to the NqrF family. In terms of assembly, composed of six subunits; NqrA, NqrB, NqrC, NqrD, NqrE and NqrF. Requires [2Fe-2S] cluster as cofactor. FAD is required as a cofactor.

The protein localises to the cell inner membrane. The enzyme catalyses a ubiquinone + n Na(+)(in) + NADH + H(+) = a ubiquinol + n Na(+)(out) + NAD(+). Functionally, NQR complex catalyzes the reduction of ubiquinone-1 to ubiquinol by two successive reactions, coupled with the transport of Na(+) ions from the cytoplasm to the periplasm. The first step is catalyzed by NqrF, which accepts electrons from NADH and reduces ubiquinone-1 to ubisemiquinone by a one-electron transfer pathway. The chain is Na(+)-translocating NADH-quinone reductase subunit F from Vibrio parahaemolyticus serotype O3:K6 (strain RIMD 2210633).